The following is a 148-amino-acid chain: 3-dehydroquinate dehydratase (148 aa).

Residue Y23 is the Proton acceptor of the active site. N75, H81, and D88 together coordinate substrate. Residue H101 is the Proton donor of the active site. Residues 102 to 103 (LS) and R112 contribute to the substrate site.

This sequence belongs to the type-II 3-dehydroquinase family. Homododecamer.

The enzyme catalyses 3-dehydroquinate = 3-dehydroshikimate + H2O. It functions in the pathway metabolic intermediate biosynthesis; chorismate biosynthesis; chorismate from D-erythrose 4-phosphate and phosphoenolpyruvate: step 3/7. Functionally, catalyzes a trans-dehydration via an enolate intermediate. This chain is 3-dehydroquinate dehydratase, found in Ectopseudomonas mendocina (strain ymp) (Pseudomonas mendocina).